A 285-amino-acid polypeptide reads, in one-letter code: ATP synthase gamma chain (285 aa).

This sequence belongs to the ATPase gamma chain family. As to quaternary structure, F-type ATPases have 2 components, CF(1) - the catalytic core - and CF(0) - the membrane proton channel. CF(1) has five subunits: alpha(3), beta(3), gamma(1), delta(1), epsilon(1). CF(0) has three main subunits: a, b and c.

The protein resides in the cell membrane. In terms of biological role, produces ATP from ADP in the presence of a proton gradient across the membrane. The gamma chain is believed to be important in regulating ATPase activity and the flow of protons through the CF(0) complex. The sequence is that of ATP synthase gamma chain from Dehalococcoides mccartyi (strain ATCC BAA-2100 / JCM 16839 / KCTC 5957 / BAV1).